We begin with the raw amino-acid sequence, 257 residues long: Protein orai-2 (257 aa).

4 helical membrane passes run 67–84, 95–115, 149–169, and 199–219; these read TSAL…EVQL, LIAF…ALLI, LAWG…VVLL, and AALV…VFTI.

Belongs to the Orai family.

Its subcellular location is the membrane. Ca(2+) release-activated Ca(2+)-like (CRAC-like) channel subunit which mediates Ca(2+) influx and increase in Ca(2+)-selective current by synergy with the Ca(2+) sensor, STIM1. This Gallus gallus (Chicken) protein is Protein orai-2 (ORAI2).